A 660-amino-acid chain; its full sequence is UvrABC system protein B (660 aa).

Positions 26–414 (KKVLAGQRHQ…PEMTEQIIRP (389 aa)) constitute a Helicase ATP-binding domain. 39–46 (GATGTGKT) is an ATP binding site. The Beta-hairpin motif lies at 92 to 115 (YYDYYQPEAYVPSTDTFIEKDASI). Positions 430 to 596 (QIDNLIEEIR…TIRKEVRDVI (167 aa)) constitute a Helicase C-terminal domain. One can recognise a UVR domain in the interval 624 to 659 (EKVIEQMENEMKQAAKDLDFEKAAELRDVILELKAE).

It belongs to the UvrB family. As to quaternary structure, forms a heterotetramer with UvrA during the search for lesions. Interacts with UvrC in an incision complex.

It is found in the cytoplasm. In terms of biological role, the UvrABC repair system catalyzes the recognition and processing of DNA lesions. A damage recognition complex composed of 2 UvrA and 2 UvrB subunits scans DNA for abnormalities. Upon binding of the UvrA(2)B(2) complex to a putative damaged site, the DNA wraps around one UvrB monomer. DNA wrap is dependent on ATP binding by UvrB and probably causes local melting of the DNA helix, facilitating insertion of UvrB beta-hairpin between the DNA strands. Then UvrB probes one DNA strand for the presence of a lesion. If a lesion is found the UvrA subunits dissociate and the UvrB-DNA preincision complex is formed. This complex is subsequently bound by UvrC and the second UvrB is released. If no lesion is found, the DNA wraps around the other UvrB subunit that will check the other stand for damage. The protein is UvrABC system protein B of Oceanobacillus iheyensis (strain DSM 14371 / CIP 107618 / JCM 11309 / KCTC 3954 / HTE831).